The sequence spans 1042 residues: FHIP family protein AAEL005291 (1042 aa).

Over residues 1 to 14 (MSWLRSSPLRQSFS) the composition is skewed to polar residues. Disordered stretches follow at residues 1–31 (MSWLRSSPLRQSFSKAGGGSGSGASSRGGNS), 494–514 (NNTSQASSMLGSGPSSMPQGG), 821–866 (PHSG…KRND), and 905–977 (SNSS…GSPH). Polar residues predominate over residues 839 to 859 (VSMTSNLSQTTPMQLTPSSSY). Composition is skewed to low complexity over residues 905–940 (SNSSSISHQSSSTPSPAGSQQYLSSNSSGVSSFMGS) and 956–976 (PSIGGPPSSMGPTSLTSTGSP).

Belongs to the FHIP family.

This Aedes aegypti (Yellowfever mosquito) protein is FHIP family protein AAEL005291.